A 228-amino-acid chain; its full sequence is uncharacterized protein (228 aa).

A coiled-coil region spans residues 196–228 (VKITELLDKAKISINDLNKTIEKLNETVNKYHG).

This is an uncharacterized protein from Acanthamoeba polyphaga (Amoeba).